Here is a 426-residue protein sequence, read N- to C-terminus: Trophoblast glycoprotein (426 aa).

A signal peptide spans 1–31 (MPGAGSRGPSAGDGRLRLARLALVLLGWVSA). Residues 32–361 (SAPSSSLPSS…ATLPQSLQTS (330 aa)) are Extracellular-facing. The span at 34 to 51 (PSSSLPSSSTSPAAFLAS) shows a compositional bias: low complexity. The interval 34–54 (PSSSLPSSSTSPAAFLASGSA) is disordered. The region spanning 53–91 (SAQPPPAERCPAACECSEAARTVKCVNRNLLEVPADLPP) is the LRRNT domain. Intrachain disulfides connect Cys-62–Cys-68 and Cys-66–Cys-77. LRR repeat units follow at residues 92 to 113 (YVRN…AFAR), 116 to 139 (PLAD…GAFE), and 141 to 163 (LPGL…FTFA). Residue Asn-124 is glycosylated (N-linked (GlcNAc...) asparagine). Asn-166 carries N-linked (GlcNAc...) asparagine glycosylation. LRR repeat units lie at residues 172-210 (PSPL…AALR), 215-238 (LRGL…LLDQ), 239-261 (LPSL…ASFR), and 262-281 (NLTH…VLHN). The N-linked (GlcNAc...) asparagine glycan is linked to Asn-281. The LRRCT domain occupies 289–352 (GLAHVRVFLD…LTSSDLDCDA (64 aa)). 2 disulfide bridges follow: Cys-304–Cys-329 and Cys-306–Cys-350. The chain crosses the membrane as a helical span at residues 362 to 382 (YVFLGIVLALIGAIFLLVLYL). Residues 383-426 (NRKGIKKWMHNIRDACRDHMEGYHYRYEINADPRLTNLSSNSDV) lie on the Cytoplasmic side of the membrane. Ser-424 carries the phosphoserine modification.

Post-translationally, highly glycosylated.

The protein localises to the cell membrane. Its function is as follows. May function as an inhibitor of Wnt/beta-catenin signaling by indirectly interacting with LRP6 and blocking Wnt3a-dependent LRP6 internalization. The protein is Trophoblast glycoprotein (Tpbg) of Rattus norvegicus (Rat).